The following is a 256-amino-acid chain: 5-keto-4-deoxy-D-glucarate aldolase (256 aa).

Histidine 50 (proton acceptor) is an active-site residue. A substrate-binding site is contributed by glutamine 151. Residue glutamate 153 participates in Mg(2+) binding. Substrate-binding residues include serine 178 and aspartate 179. Aspartate 179 provides a ligand contact to Mg(2+).

It belongs to the HpcH/HpaI aldolase family. KDGluc aldolase subfamily. In terms of assembly, homohexamer; trimer of dimers. The cofactor is Mg(2+).

It catalyses the reaction 5-dehydro-4-deoxy-D-glucarate = 2-hydroxy-3-oxopropanoate + pyruvate. It carries out the reaction 2-dehydro-3-deoxy-D-glucarate = 2-hydroxy-3-oxopropanoate + pyruvate. Its pathway is carbohydrate acid metabolism; galactarate degradation; D-glycerate from galactarate: step 2/3. In terms of biological role, catalyzes the reversible retro-aldol cleavage of both 5-keto-4-deoxy-D-glucarate and 2-keto-3-deoxy-D-glucarate to pyruvate and tartronic semialdehyde. The polypeptide is 5-keto-4-deoxy-D-glucarate aldolase (Klebsiella pneumoniae subsp. pneumoniae (strain ATCC 700721 / MGH 78578)).